Here is a 93-residue protein sequence, read N- to C-terminus: U12-lycotoxin-Ls1a (93 aa).

The N-terminal stretch at 1–18 (MKFAVILLFSLVVLTVAS) is a signal peptide. A propeptide spanning residues 19-38 (ESVEEVRREIDIEDLPEQQR) is cleaved from the precursor.

Belongs to the neurotoxin 31 family. Post-translationally, contains 5 disulfide bonds. Expressed by the venom gland.

Its subcellular location is the secreted. The sequence is that of U12-lycotoxin-Ls1a from Lycosa singoriensis (Wolf spider).